Here is a 476-residue protein sequence, read N- to C-terminus: Vitamin D-binding protein (476 aa).

An N-terminal signal peptide occupies residues 1–16; sequence MKRVLVLLLALAFGHA. Albumin domains are found at residues 17-208, 209-394, and 395-476; these read LERG…QMKH, LSLL…LLKR, and QLTS…TLQS. Intrachain disulfides connect Cys29/Cys75, Cys74/Cys83, Cys96/Cys112, Cys111/Cys122, Cys145/Cys190, Cys189/Cys198, Cys220/Cys266, Cys265/Cys273, Cys286/Cys300, Cys299/Cys311, Cys335/Cys376, Cys375/Cys384, Cys407/Cys453, and Cys452/Cys462. Asn288 carries an N-linked (GlcNAc...) asparagine glycan. The residue at position 434 (Ser434) is a Phosphoserine.

This sequence belongs to the ALB/AFP/VDB family. In terms of assembly, associates with membrane-bound immunoglobulin on the surface of B-lymphocytes and with IgG Fc receptor on the membranes of T-lymphocytes. Interacts with LRP2; the interaction is required for renal uptake of GC in complex with 25-hydroxyvitamin D3.

It localises to the secreted. Its function is as follows. Involved in vitamin D transport and storage, scavenging of extracellular G-actin, enhancement of the chemotactic activity of C5 alpha for neutrophils in inflammation and macrophage activation. The chain is Vitamin D-binding protein (Gc) from Mus musculus (Mouse).